The primary structure comprises 594 residues: Zinc finger protein 467 (594 aa).

Residues 1 to 86 (MRETLEALNS…PQKAEPAGSV (86 aa)) are disordered. The interval 1–183 (MRETLEALNS…TLRLHQRLHR (183 aa)) is interaction with STAT3. Positions 31–47 (SNAQEKMSSRGESTLHS) are enriched in polar residues. Residues 54–64 (PGQKEGIHTEQ) show a composition bias toward basic and acidic residues. Lys-97 is covalently cross-linked (Glycyl lysine isopeptide (Lys-Gly) (interchain with G-Cter in SUMO2)). 12 consecutive C2H2-type zinc fingers follow at residues 160-182 (YGCEECERRFRDQLTLRLHQRLH), 188-210 (CACPDCGRSFTQRAHMLLHQRSH), 216-238 (FPCSECDKRFSKKAHLTRHLRTH), 244-266 (YPCAECGKRFSQKIHLGSHQKTH), 272-294 (FPCTECEKRFRKKTHLIRHQRIH), 300-322 (YQCTQCTRSFTHKQHLVRHQRVH), 355-377 (FACSHCGQSFGWKKNLATHQSLH), 430-452 (FFCPDCGRGFAHGQHLARHRRVH), 458-480 (FACAQCGRRFGSRPNLVAHSRAH), 486-508 (FACAQCGRRFSRKSHLGRHQAVH), 514-536 (HACAVCARCFSSKTNLVRHQAIH), and 542-564 (FSCPQCAKSFSRKTHLVRHQRIH). The interval 313-351 (QHLVRHQRVHDAASRTRSSPDIPVAPHSPTASLTPSPPG) is disordered. A Glycyl lysine isopeptide (Lys-Gly) (interchain with G-Cter in SUMO2) cross-link involves residue Lys-368.

It belongs to the krueppel C2H2-type zinc-finger protein family. As to quaternary structure, interacts with STAT3. Enhances STAT3 activity by keeping it in the nucleus.

It localises to the nucleus. In terms of biological role, transcription factor that promotes adipocyte differentiation and suppresses osteoblast differentiation in the bone marrow. Enhances the osteoclast-supporting ability of stromal cells. Binds with STAT3 the consensus sequence 5'-CTTCTGGGAAGA-3' of the acute phase response element (APRE). Transactivates several promoters including FOS, OSM and PPARG. Recruits a histone deacetylase complex. The protein is Zinc finger protein 467 (Znf467) of Mus musculus (Mouse).